A 562-amino-acid chain; its full sequence is Phosphoglucomutase-1 (562 aa).

Position 1 is an N-acetylmethionine (Met1). Lys16 is subject to N6-acetyllysine. Arg23 serves as a coordination point for alpha-D-glucose 1,6-bisphosphate. Thr115 carries the phosphothreonine modification. An alpha-D-glucose 1,6-bisphosphate-binding site is contributed by Ser117. Ser117 serves as the catalytic Phosphoserine intermediate. A Mg(2+)-binding site is contributed by Ser117. Ser117 and Ser134 each carry phosphoserine. Thr185 is subject to Phosphothreonine. 3 positions are modified to phosphoserine: Ser201, Ser206, and Ser213. The Mg(2+) site is built by Asp288, Asp290, and Asp292. Positions 292 and 293 each coordinate alpha-D-glucose 1,6-bisphosphate. Lys349 carries the N6-acetyllysine modification. At Tyr353 the chain carries Phosphotyrosine. Thr357 is an alpha-D-glucose 1,6-bisphosphate binding site. Ser369 carries the post-translational modification Phosphoserine. Positions 376, 378, and 389 each coordinate alpha-D-glucose 1,6-bisphosphate. Ser378 carries the post-translational modification Phosphoserine. N6-succinyllysine is present on Lys419. Thr467 is modified (phosphothreonine; by PAK1). 3 positions are modified to phosphoserine: Ser477, Ser485, and Ser505. Position 507 is a phosphothreonine (Thr507). A phosphoserine mark is found at Ser509 and Ser541.

Belongs to the phosphohexose mutase family. As to quaternary structure, monomer. Requires Mg(2+) as cofactor. Phosphorylation at Thr-467 by PAK1 significantly enhances enzymatic activity.

It localises to the cytoplasm. It carries out the reaction alpha-D-glucose 1-phosphate = alpha-D-glucose 6-phosphate. It catalyses the reaction O-phospho-L-seryl-[protein] + alpha-D-glucose 1-phosphate = alpha-D-glucose 1,6-bisphosphate + L-seryl-[protein]. The catalysed reaction is alpha-D-glucose 1,6-bisphosphate + L-seryl-[protein] = O-phospho-L-seryl-[protein] + alpha-D-glucose 6-phosphate. With respect to regulation, glucose-1,6-bisphosphate enhances phosphorylation of the active site Ser-117, and thereby increases enzyme activity. In terms of biological role, catalyzes the reversible isomerization of alpha-D-glucose 1-phosphate to alpha-D-glucose 6-phosphate. The mechanism proceeds via the intermediate compound alpha-D-glucose 1,6-bisphosphate. This enzyme participates in both the breakdown and synthesis of glucose. The chain is Phosphoglucomutase-1 (PGM1) from Homo sapiens (Human).